The primary structure comprises 126 residues: MNKGTVAELRLEHNTVVATLEEEVKREQAKQLQATERMLVDSDDHAFVYVLEDEETFFYLRFPEATWTVLKEGMNSGKEVVAHLNQETLITCHNFYNELRYLIDNIAGNGNYGEEMERAVQNAFGE.

The protein belongs to the UPF0738 family.

The polypeptide is UPF0738 protein BH2850 (Halalkalibacterium halodurans (strain ATCC BAA-125 / DSM 18197 / FERM 7344 / JCM 9153 / C-125) (Bacillus halodurans)).